The following is a 211-amino-acid chain: Uracil phosphoribosyltransferase (211 aa).

A GTP-binding site is contributed by 30-34 (KGLVR). Residues arginine 79, arginine 104, and 133–141 (DPMLATGTT) contribute to the 5-phospho-alpha-D-ribose 1-diphosphate site. Residues isoleucine 197 and 202–204 (GDA) each bind uracil. Residue aspartate 203 participates in 5-phospho-alpha-D-ribose 1-diphosphate binding.

It belongs to the UPRTase family. The cofactor is Mg(2+).

The enzyme catalyses UMP + diphosphate = 5-phospho-alpha-D-ribose 1-diphosphate + uracil. It functions in the pathway pyrimidine metabolism; UMP biosynthesis via salvage pathway; UMP from uracil: step 1/1. With respect to regulation, allosterically activated by GTP. Functionally, catalyzes the conversion of uracil and 5-phospho-alpha-D-ribose 1-diphosphate (PRPP) to UMP and diphosphate. The sequence is that of Uracil phosphoribosyltransferase from Pyrobaculum arsenaticum (strain DSM 13514 / JCM 11321 / PZ6).